The primary structure comprises 121 residues: Large ribosomal subunit protein uL18 (121 aa).

A compositionally biased stretch (basic residues) spans 1 to 19 (MASKKVQKIRDKRKARVRA). The segment at 1-23 (MASKKVQKIRDKRKARVRAKISG) is disordered.

It belongs to the universal ribosomal protein uL18 family. Part of the 50S ribosomal subunit; part of the 5S rRNA/L5/L18/L25 subcomplex. Contacts the 5S and 23S rRNAs.

In terms of biological role, this is one of the proteins that bind and probably mediate the attachment of the 5S RNA into the large ribosomal subunit, where it forms part of the central protuberance. The sequence is that of Large ribosomal subunit protein uL18 from Syntrophus aciditrophicus (strain SB).